A 91-amino-acid chain; its full sequence is Probable Fe(2+)-trafficking protein (91 aa).

It belongs to the Fe(2+)-trafficking protein family.

Its function is as follows. Could be a mediator in iron transactions between iron acquisition and iron-requiring processes, such as synthesis and/or repair of Fe-S clusters in biosynthetic enzymes. In Mannheimia succiniciproducens (strain KCTC 0769BP / MBEL55E), this protein is Probable Fe(2+)-trafficking protein.